A 491-amino-acid polypeptide reads, in one-letter code: uncharacterized protein (491 aa).

Residue 267 to 274 (GIQGTGKS) coordinates ATP.

It belongs to the AAA ATPase family. Highly divergent.

The protein localises to the plastid. It is found in the chloroplast. This is an uncharacterized protein from Gracilaria tenuistipitata var. liui (Red alga).